Reading from the N-terminus, the 662-residue chain is Zinc finger protein 800 (662 aa).

Residues 69–91 form a C2H2-type 1; degenerate zinc finger; the sequence is FECKLCRSLFRGLPNLITHKKFY. Lys132 participates in a covalent cross-link: Glycyl lysine isopeptide (Lys-Gly) (interchain with G-Cter in SUMO2). Disordered regions lie at residues 172–197 and 205–224; these read ETSS…PPSI and AAPT…TSDS. Low complexity predominate over residues 205 to 216; the sequence is AAPTEEQPQESQ. Residues 231 to 254 form a C2H2-type 2 zinc finger; it reads LICCLCRKEFNSRRGVRRHIRKVH. Lys280 participates in a covalent cross-link: Glycyl lysine isopeptide (Lys-Gly) (interchain with G-Cter in SUMO2). The C2H2-type 3 zinc finger occupies 288-311; it reads RSCPVCCKSFATKANVRRHFDEVH. Position 318 is a phosphoserine (Ser318). Positions 319–349 are disordered; that stretch reads ITPDIATKPGQPLFLDSASPKKSFKTRKQKS. Thr320 is subject to Phosphothreonine. Ser337 carries the phosphoserine modification. Basic residues predominate over residues 340–349; it reads KSFKTRKQKS. The C2H2-type 4 zinc finger occupies 357-382; the sequence is TACKCLLCKRKYSSQIMLKRHMQIVH. A disordered region spans residues 389–473; it reads ANSKREKGPN…AGGQQKTRKP (85 aa). Residue Lys392 forms a Glycyl lysine isopeptide (Lys-Gly) (interchain with G-Cter in SUMO2) linkage. Positions 414–434 are enriched in polar residues; the sequence is VESSPPSITHSPQNELKGTNH. A phosphoserine mark is found at Ser420, Ser424, Ser453, Ser455, Ser458, and Ser460. A compositionally biased stretch (low complexity) spans 456-468; the sequence is PKSASPSAAGGQQ. Lys474 participates in a covalent cross-link: Glycyl lysine isopeptide (Lys-Gly) (interchain with G-Cter in SUMO2). C2H2-type zinc fingers lie at residues 484 to 506 and 517 to 540; these read LYCK…IELH and YKCP…TVVH. 2 disordered regions span residues 573–597 and 633–662; these read RGPS…PSKK and HHKK…KALV. Residues 575–587 are compositionally biased toward basic and acidic residues; the sequence is PSREEAKHNDSKQ. Lys597 is covalently cross-linked (Glycyl lysine isopeptide (Lys-Gly) (interchain with G-Cter in SUMO2)). The C2H2-type 7 zinc-finger motif lies at 616–638; the sequence is HRCNKCGKAFAKKTYLEHHKKTH. The span at 651–662 shows a compositional bias: basic residues; it reads TKGRSTRSKALV.

The protein belongs to the krueppel C2H2-type zinc-finger protein family.

It is found in the nucleus. Functionally, may be involved in transcriptional regulation. The protein is Zinc finger protein 800 (Znf800) of Mus musculus (Mouse).